A 148-amino-acid chain; its full sequence is Large ribosomal subunit protein uL13 (148 aa).

It belongs to the universal ribosomal protein uL13 family. Part of the 50S ribosomal subunit.

This protein is one of the early assembly proteins of the 50S ribosomal subunit, although it is not seen to bind rRNA by itself. It is important during the early stages of 50S assembly. This is Large ribosomal subunit protein uL13 from Oenococcus oeni (strain ATCC BAA-331 / PSU-1).